Here is a 555-residue protein sequence, read N- to C-terminus: Glucose-6-phosphate isomerase (555 aa).

Residues 169–170 (GS), 219–224 (SKTFTT), Gln-364, Glu-368, His-399, and Lys-521 contribute to the D-glucose 6-phosphate site. The active-site Proton donor is the Glu-368. Residues His-399 and Lys-521 contribute to the active site.

This sequence belongs to the GPI family. In terms of assembly, homodimer.

The protein resides in the cytoplasm. It localises to the cytosol. The catalysed reaction is alpha-D-glucose 6-phosphate = beta-D-fructose 6-phosphate. It participates in carbohydrate degradation; glycolysis; D-glyceraldehyde 3-phosphate and glycerone phosphate from D-glucose: step 2/4. Its function is as follows. In the cytoplasm, catalyzes the conversion of glucose-6-phosphate to fructose-6-phosphate, the second step in glycolysis, and the reverse reaction during gluconeogenesis. This Kluyveromyces lactis (strain ATCC 8585 / CBS 2359 / DSM 70799 / NBRC 1267 / NRRL Y-1140 / WM37) (Yeast) protein is Glucose-6-phosphate isomerase (RAG2).